Consider the following 101-residue polypeptide: Small ribosomal subunit protein uS14 (101 aa).

It belongs to the universal ribosomal protein uS14 family. In terms of assembly, part of the 30S ribosomal subunit. Contacts proteins S3 and S10.

Binds 16S rRNA, required for the assembly of 30S particles and may also be responsible for determining the conformation of the 16S rRNA at the A site. The chain is Small ribosomal subunit protein uS14 from Shewanella sp. (strain MR-4).